The sequence spans 234 residues: Segregation and condensation protein A (234 aa).

It belongs to the ScpA family. As to quaternary structure, component of a cohesin-like complex composed of ScpA, ScpB and the Smc homodimer, in which ScpA and ScpB bind to the head domain of Smc. The presence of the three proteins is required for the association of the complex with DNA.

It localises to the cytoplasm. Functionally, participates in chromosomal partition during cell division. May act via the formation of a condensin-like complex containing Smc and ScpB that pull DNA away from mid-cell into both cell halves. This is Segregation and condensation protein A from Streptococcus pyogenes serotype M12 (strain MGAS2096).